The chain runs to 304 residues: Uricase (304 aa).

Ala2 is modified (N-acetylalanine). Lys10 and Lys23 each carry N6-acetyllysine; alternate. Lys10 and Lys23 each carry N6-succinyllysine; alternate. Lys23 acts as the Charge relay system in catalysis. N6-acetyllysine is present on residues Lys27 and Lys36. Residues Ser39 and Ser63 each carry the phosphoserine modification. The active-site Charge relay system is the Thr68. 2 residues coordinate urate: Thr68 and Asp69. N6-acetyllysine occurs at positions 118, 122, and 164. Residue Phe170 coordinates urate. N6-acetyllysine occurs at positions 175 and 185. A urate-binding site is contributed by Arg187. N6-acetyllysine; alternate is present on residues Lys221 and Lys228. N6-succinyllysine; alternate is present on residues Lys221 and Lys228. Residue Ser232 is modified to Phosphoserine. 3 residues coordinate urate: Val235, Gln236, and Asn262. Catalysis depends on His264, which acts as the Charge relay system. Lys278 is modified (N6-acetyllysine). Tyr289 carries the phosphotyrosine modification. The short motif at 302–304 is the Microbody targeting signal element; sequence SRL.

It belongs to the uricase family.

It localises to the peroxisome. The enzyme catalyses urate + O2 + H2O = 5-hydroxyisourate + H2O2. Its pathway is purine metabolism; urate degradation; (S)-allantoin from urate: step 1/3. Its function is as follows. Catalyzes the oxidation of uric acid to 5-hydroxyisourate, which is further processed to form (S)-allantoin. The sequence is that of Uricase (UOX) from Macaca fascicularis (Crab-eating macaque).